Reading from the N-terminus, the 417-residue chain is Voltage-gated ClC-type chloride channel ClcB (417 aa).

At methionine 1–arginine 4 the chain is on the cytoplasmic side. The helical transmembrane segment at leucine 5–alanine 25 threads the bilayer. Residues methionine 26–arginine 53 lie on the Periplasmic side of the membrane. The chain crosses the membrane as a helical span at residues leucine 54–methionine 74. The Cytoplasmic portion of the chain corresponds to asparagine 75 to lysine 145. The helical transmembrane segment at leucine 146 to glycine 166 threads the bilayer. Residues serine 167–glutamate 172 are Periplasmic-facing. Residues isoleucine 173–leucine 195 traverse the membrane as a helical segment. Over threonine 196–tyrosine 221 the chain is Cytoplasmic. A helical transmembrane segment spans residues valine 222–methionine 242. At threonine 243–proline 257 the chain is on the periplasmic side. The chain crosses the membrane as a helical span at residues tryptophan 258 to tryptophan 278. Topologically, residues glycine 279–serine 287 are cytoplasmic. Residues phenylalanine 288 to alanine 308 traverse the membrane as a helical segment. At valine 309–serine 315 the chain is on the periplasmic side. A helical membrane pass occupies residues glycine 316–leucine 336. Residues glycine 337–arginine 338 are Cytoplasmic-facing. Residues isoleucine 339–methionine 359 traverse the membrane as a helical segment. Topologically, residues alanine 360–glutamate 379 are periplasmic. A helical membrane pass occupies residues methionine 380 to leucine 400. At serine 401 to histidine 417 the chain is on the cytoplasmic side.

This sequence belongs to the chloride channel (TC 2.A.49) family. ClcB subfamily.

It localises to the cell inner membrane. In terms of biological role, probably acts as an electrical shunt for an outwardly-directed proton pump that is linked to amino acid decarboxylation, as part of the extreme acid resistance (XAR) response. In Salmonella typhi, this protein is Voltage-gated ClC-type chloride channel ClcB (clcB).